We begin with the raw amino-acid sequence, 209 residues long: N-acetyltransferase aca1 (209 aa).

The N-acetyltransferase domain occupies 26 to 202 (TNVKNKEELL…DAYIYQYHFP (177 aa)). N118 lines the substrate pocket. 128–133 (RSKGIG) lines the CoA pocket. Residue 155-156 (NL) participates in substrate binding.

This sequence belongs to the acetyltransferase family. As to quaternary structure, homodimer.

It localises to the cytoplasm. It is found in the mitochondrion. It catalyses the reaction L-glutamate 5-semialdehyde + acetyl-CoA = N-acetyl-L-glutamate 5-semialdehyde + CoA + H(+). N-acetyltransferase involved in oxidative stress resistance. Acetylates the toxic proline metabolism intermediate (S)-1-pyrroline-5-carboxylate (P5C), or more likely its spontaneously forming tautomer glutamate-5-semialdehyde (GSA) into N-acetyl-GSA for arginine synthesis in the mitochondria. P5C has been shown to increase the levels of reactive oxygen species (ROS) in the cell by inhibiting the function of the respiratory chain in the mitochondria. The enzyme is able to reduce intracellular ROS levels under P5C-induced oxidative stress and protects cells from damage by oxidative stress. Also acetylates and thereby detoxifies the proline analog azetidine-2-carboxylate (AZC), however it is unlikely that AZC is a natural substrate as it occurs only in plants belonging to the Lilaceae family. The sequence is that of N-acetyltransferase aca1 from Schizosaccharomyces pombe (strain 972 / ATCC 24843) (Fission yeast).